Reading from the N-terminus, the 1013-residue chain is Retinoblastoma-related protein 1 (1013 aa).

The segment at 406-607 is domain A; the sequence is TPVSTAMTTA…EKGSSMYNSL (202 aa). Residues 406 to 858 are pocket; it reads TPVSTAMTTA…NEIFIPAVKP (453 aa). Residues 608 to 727 are spacer; that stretch reads IVARPSLALE…PGGGGETCAE (120 aa). Positions 728–858 are domain B; that stretch reads TGINIFFTKI…NEIFIPAVKP (131 aa). 2 positions are modified to phosphoserine: Ser-885 and Ser-898. Residues 979 to 1013 form a disordered region; that stretch reads VANSLNLQNQNQNQNGSDASSSGGAAPLKTEPTDS. Residues 980 to 1004 are compositionally biased toward low complexity; the sequence is ANSLNLQNQNQNQNGSDASSSGGAA.

This sequence belongs to the retinoblastoma protein (RB) family. As to quaternary structure, interacts with the begomovirus replication-associated protein (Rep), the nanovirus Clink protein, the mastrevirus RepA protein, E2FA, E2FB and E2FC. Interacts with MSI1 through its Domain A. Interacts with ATPK1/S6K1. Interacts with SCR. Interacts with HAT2. Interacts with FAMA. Interacts with MYB124 and MYB88. Component of a DREAM-like complex which modulates a variety of developmentally regulated genes and of the mitotic genes in proliferating and differentiated cells. Associates with MYB3R3 in both earlier and later stages of leaves development. Interacts with MYB3R4 only at early stages of leaves development. Highly phosphorylated by CDKA-1 during G1 to S phase transition. Once hyper-phosphorylated, becomes inactive and unable to interact with E2F. In terms of processing, ubiquitinated. Subject to proteasome-dependent degradation during sucrose starvation. As to expression, expressed in actively dividing cells. Detected in the shoot apical meristem, in young leaf primordia and in both sporophytic tissue and the megagametophyte.

It localises to the nucleus. Key regulator of entry into cell division. Acts as a transcription repressor of E2F target genes, whose activity is required for progress from the G1 to the S phase of the cell cycle. Hyperphosphorylation by CDKA-1 prevents the binding to E2F transcription factors, allowing G1 to S phase transition to operate. Forms a stable complex with E2FA that functions in maintaining cell proliferation through repression of cell differentiation. Plays a central role in the mechanism controlling meristem cell differentiation, cell fate establishment and cell fate maintenance during organogenesis and gametogenesis. Required during lateral organ production. Also involved in controlling asymmetric divisions of stem cells in different stem cell niches. Acts as a negative regulator of cell proliferation during leaf and gametophytes development. At later stages of development, restricts the progression through additional endocycles. In the leaf, plays a role in the control of the mesophyll differentiation. Another role is its implication in the regulation of imprinted genes. Acts together with MSI1 to repress the expression of MET1 during gametogenesis. This in turn activates expression of the imprinted genes FIS2 and FWA. Regulates many genes of the polycomb repressive complex 2 (PRC2). Plays an important role in meiosis affecting different aspects of this complex process. Functions as a positive regulator of the developmental switch from embryonic heterotrophic growth to autotrophic growth. Interaction with mastrevirus RepA or nanovirus Clink protein disrupts the RBR/E2F interaction and releases the transcription of replicative enzymes needed by the virus by increasing the E2F DNA-binding activity. This Arabidopsis thaliana (Mouse-ear cress) protein is Retinoblastoma-related protein 1 (RBR1).